Here is a 339-residue protein sequence, read N- to C-terminus: Phosphoribosylformylglycinamidine cyclo-ligase (339 aa).

It belongs to the AIR synthase family.

It localises to the cytoplasm. It catalyses the reaction 2-formamido-N(1)-(5-O-phospho-beta-D-ribosyl)acetamidine + ATP = 5-amino-1-(5-phospho-beta-D-ribosyl)imidazole + ADP + phosphate + H(+). Its pathway is purine metabolism; IMP biosynthesis via de novo pathway; 5-amino-1-(5-phospho-D-ribosyl)imidazole from N(2)-formyl-N(1)-(5-phospho-D-ribosyl)glycinamide: step 2/2. The chain is Phosphoribosylformylglycinamidine cyclo-ligase from Methanobrevibacter smithii (strain ATCC 35061 / DSM 861 / OCM 144 / PS).